A 943-amino-acid chain; its full sequence is PAX-interacting protein 1 (943 aa).

BRCT domains follow at residues 8 to 93 (VPEE…GFSP) and 94 to 182 (ESGQ…LYHP). Disordered regions lie at residues 190-281 (PEEE…RRLQ), 400-507 (AQQQ…QQMR), and 620-641 (QQHL…PHQT). The segment covering 198-214 (ENERSSRSEGSYSDRRS) has biased composition (basic and acidic residues). Low complexity predominate over residues 220–230 (SSPTSSRDASP). Residues 620 to 635 (QQHLQNQQPLQHQNQQ) show a composition bias toward low complexity. 2 BRCT domains span residues 664-756 (PEEG…RTLH) and 763-851 (PGAK…IQHS). A Nuclear localization signal motif is present at residues 730-747 (GKRCVTAHWLNTVLKKKK).

Interacts with smad2 via its last three BRCT domain-containing regions in an activin signal-dependent manner.

Its subcellular location is the nucleus. Involved in DNA damage response. May function as transcriptional cofactor in TGF beta signaling. Accentuates Smad2-dependent transcription. This is PAX-interacting protein 1 (paxip1) from Danio rerio (Zebrafish).